Consider the following 95-residue polypeptide: uncharacterized protein (95 aa).

The helical transmembrane segment at leucine 29–leucine 53 threads the bilayer.

The protein resides in the membrane. This is an uncharacterized protein from Schizosaccharomyces pombe (strain 972 / ATCC 24843) (Fission yeast).